The sequence spans 206 residues: Thymidylate kinase (206 aa).

Glycine 10–serine 17 serves as a coordination point for ATP.

It belongs to the thymidylate kinase family.

The catalysed reaction is dTMP + ATP = dTDP + ADP. Phosphorylation of dTMP to form dTDP in both de novo and salvage pathways of dTTP synthesis. The protein is Thymidylate kinase (tmk) of Neisseria meningitidis serogroup A / serotype 4A (strain DSM 15465 / Z2491).